The following is a 336-amino-acid chain: Quinolinate synthase (336 aa).

Iminosuccinate contacts are provided by histidine 25 and serine 42. Cysteine 86 provides a ligand contact to [4Fe-4S] cluster. Residues 117-119 (YIN) and serine 138 each bind iminosuccinate. Cysteine 198 serves as a coordination point for [4Fe-4S] cluster. Residues 224-226 (HPE) and threonine 241 contribute to the iminosuccinate site. Cysteine 288 provides a ligand contact to [4Fe-4S] cluster.

The protein belongs to the quinolinate synthase family. Type 3 subfamily. [4Fe-4S] cluster is required as a cofactor.

The protein resides in the cytoplasm. The enzyme catalyses iminosuccinate + dihydroxyacetone phosphate = quinolinate + phosphate + 2 H2O + H(+). The protein operates within cofactor biosynthesis; NAD(+) biosynthesis; quinolinate from iminoaspartate: step 1/1. Functionally, catalyzes the condensation of iminoaspartate with dihydroxyacetone phosphate to form quinolinate. The chain is Quinolinate synthase from Helicobacter pylori (strain ATCC 700392 / 26695) (Campylobacter pylori).